Consider the following 593-residue polypeptide: NADH-quinone oxidoreductase subunit C/D (593 aa).

The interval 1 to 184 is NADH dehydrogenase I subunit C; sequence MTTGSALYIP…DPFSLNLAKQ (184 aa). The segment at 208-593 is NADH dehydrogenase I subunit D; the sequence is DYMFLNLGPN…IDFVMADVDR (386 aa).

The protein in the N-terminal section; belongs to the complex I 30 kDa subunit family. In the C-terminal section; belongs to the complex I 49 kDa subunit family. In terms of assembly, NDH-1 is composed of 13 different subunits. Subunits NuoB, CD, E, F, and G constitute the peripheral sector of the complex.

The protein resides in the cell inner membrane. The enzyme catalyses a quinone + NADH + 5 H(+)(in) = a quinol + NAD(+) + 4 H(+)(out). In terms of biological role, NDH-1 shuttles electrons from NADH, via FMN and iron-sulfur (Fe-S) centers, to quinones in the respiratory chain. The immediate electron acceptor for the enzyme in this species is believed to be ubiquinone. Couples the redox reaction to proton translocation (for every two electrons transferred, four hydrogen ions are translocated across the cytoplasmic membrane), and thus conserves the redox energy in a proton gradient. The sequence is that of NADH-quinone oxidoreductase subunit C/D from Pseudomonas fluorescens (strain ATCC BAA-477 / NRRL B-23932 / Pf-5).